The chain runs to 248 residues: Mannose-binding protein C (248 aa).

A signal peptide spans methionine 1–serine 20. Residues glycine 42–lysine 99 form the Collagen-like domain. The interval isoleucine 43–leucine 107 is disordered. Residue proline 47 is modified to 4-hydroxyproline. Residues lysine 49–glutamate 61 are compositionally biased toward basic and acidic residues. Residues proline 73, proline 79, proline 82, and proline 88 each carry the 4-hydroxyproline modification. The span at lysine 75–serine 87 shows a compositional bias: pro residues. Basic and acidic residues predominate over residues glutamine 93–aspartate 102. A coiled-coil region spans residues arginine 112–leucine 130. Residues valine 134–glutamate 245 enclose the C-type lectin domain. Disulfide bonds link cysteine 155/cysteine 244 and cysteine 222/cysteine 236.

In terms of assembly, oligomeric complex of 3 or more homotrimers. Interacts with MASP1 and MASP2. Interacts with MEP1A and MEP1B and may inhibit their catalytic activity. In terms of processing, hydroxylation on proline residues within the sequence motif, GXPG, is most likely to be 4-hydroxy as this fits the requirement for 4-hydroxylation in vertebrates.

Its subcellular location is the secreted. Functionally, calcium-dependent lectin involved in innate immune defense. Binds mannose, fucose and N-acetylglucosamine on different microorganisms and activates the lectin complement pathway. Binds to late apoptotic cells, as well as to apoptotic blebs and to necrotic cells, but not to early apoptotic cells, facilitating their uptake by macrophages. The sequence is that of Mannose-binding protein C (MBL2) from Hylobates lar (Lar gibbon).